Consider the following 253-residue polypeptide: tRNA1(Val) (adenine(37)-N6)-methyltransferase (253 aa).

Belongs to the methyltransferase superfamily. tRNA (adenine-N(6)-)-methyltransferase family.

The protein localises to the cytoplasm. It catalyses the reaction adenosine(37) in tRNA1(Val) + S-adenosyl-L-methionine = N(6)-methyladenosine(37) in tRNA1(Val) + S-adenosyl-L-homocysteine + H(+). Its function is as follows. Specifically methylates the adenine in position 37 of tRNA(1)(Val) (anticodon cmo5UAC). The polypeptide is tRNA1(Val) (adenine(37)-N6)-methyltransferase (Dickeya chrysanthemi (strain Ech1591) (Dickeya zeae (strain Ech1591))).